Reading from the N-terminus, the 302-residue chain is Recombination-associated protein RdgC (302 aa).

It belongs to the RdgC family.

It localises to the cytoplasm. The protein resides in the nucleoid. May be involved in recombination. This Actinobacillus pleuropneumoniae serotype 3 (strain JL03) protein is Recombination-associated protein RdgC.